Consider the following 335-residue polypeptide: 2-acylglycerol O-acyltransferase 1 (335 aa).

Transmembrane regions (helical) follow at residues 24-44 (WVLSFLLLVQVCIGIMVMLVL) and 104-124 (YIFGFHPHGIFVPGAFGNFCT). N180 carries N-linked (GlcNAc...) asparagine glycosylation.

This sequence belongs to the diacylglycerol acyltransferase family. Expressed at high level in kidney and stomach. Expressed at lower level in brown and white adipose tissue, uterus and liver. Not detected in small intestine.

Its subcellular location is the endoplasmic reticulum membrane. It carries out the reaction a 2-acylglycerol + an acyl-CoA = a 1,2-diacylglycerol + CoA. The enzyme catalyses 2-(9Z-octadecenoyl)-glycerol + butanoyl-CoA = 1-butanoyl-2-(9Z-octadecenoyl)-glycerol + CoA. It catalyses the reaction 2-(9Z-octadecenoyl)-glycerol + octanoyl-CoA = 1-octanoyl-2-(9Z-octadecenoyl)-glycerol + CoA. The catalysed reaction is 2-(9Z-octadecenoyl)-glycerol + dodecanoyl-CoA = 1-dodecanoyl-2-(9Z-octadecenoyl)-glycerol + CoA. It carries out the reaction 2-(9Z-octadecenoyl)-glycerol + tetradecanoyl-CoA = 1-tetradecanoyl-2-(9Z-octadecenoyl)-glycerol + CoA. The enzyme catalyses 2-(9Z-octadecenoyl)-glycerol + hexadecanoyl-CoA = 1-hexadecanoyl-2-(9Z-octadecenoyl)-glycerol + CoA. It catalyses the reaction 2-(9Z-octadecenoyl)-glycerol + octadecanoyl-CoA = 1-octadecanoyl-2-(9Z-octadecenoyl)-glycerol + CoA. The catalysed reaction is eicosanoyl-CoA + 2-(9Z-octadecenoyl)-glycerol = 1-eicosanoyl-2-(9Z-octadecenoyl)-glycerol + CoA. It carries out the reaction 2-(9Z-octadecenoyl)-glycerol + (9Z)-octadecenoyl-CoA = 1,2-di-(9Z-octadecenoyl)-glycerol + CoA. The enzyme catalyses 2-(9Z-octadecenoyl)-glycerol + (9Z,12Z)-octadecadienoyl-CoA = 1-(9Z,12Z-octadecadienoyl)-2-(9Z-octadecenoyl)-glycerol + CoA. It catalyses the reaction 2-(9Z-octadecenoyl)-glycerol + (5Z,8Z,11Z,14Z)-eicosatetraenoyl-CoA = 1-(5Z,8Z,11Z,14Z-eicosatetraenoyl)-2-(9Z-octadecenoyl)-glycerol + CoA. The catalysed reaction is a 2-acylglycerol + an acyl-CoA = a 1,2-diacyl-sn-glycerol + CoA. It carries out the reaction a 2-acylglycerol + an acyl-CoA = a 2,3-diacyl-sn-glycerol + CoA. The enzyme catalyses a 1-acylglycerol + an acyl-CoA = a 1,2-diacylglycerol + CoA. It catalyses the reaction 1-dodecanoylglycerol + (9Z)-octadecenoyl-CoA = 1-dodecanoyl-2-(9Z-octadecenoyl)-glycerol + CoA. The catalysed reaction is 1-tetradecanoylglycerol + (9Z)-octadecenoyl-CoA = 1-tetradecanoyl-2-(9Z-octadecenoyl)-glycerol + CoA. It carries out the reaction 1-hexadecanoylglycerol + (9Z)-octadecenoyl-CoA = 1-hexadecanoyl-2-(9Z-octadecenoyl)-glycerol + CoA. The enzyme catalyses 1-(9Z-octadecenoyl)-glycerol + (9Z)-octadecenoyl-CoA = 1,2-di-(9Z-octadecenoyl)-glycerol + CoA. It catalyses the reaction 1-(9Z,12Z-octadecadienoyl)-glycerol + (9Z)-octadecenoyl-CoA = 1-(9Z,12Z-octadecadienoyl)-2-(9Z-octadecenoyl)-glycerol + CoA. The catalysed reaction is 1-(9Z,12Z,15Z-octadecatrienoyl)-glycerol + (9Z)-octadecenoyl-CoA = 1-(9Z,12Z,15Z-octadecatrienoyl)-2-(9Z-octadecenoyl)-glycerol + CoA. It carries out the reaction 1-(5Z,8Z,11Z,14Z-eicosatetraenoyl)-glycerol + (9Z)-octadecenoyl-CoA = 1-(5Z,8Z,11Z,14Z-eicosatetraenoyl)-2-(9Z-octadecenoyl)-glycerol + CoA. The enzyme catalyses a 1-acylglycerol + an acyl-CoA = a 1,3-diacylglycerol + CoA. It catalyses the reaction 1-dodecanoylglycerol + (9Z)-octadecenoyl-CoA = 1-dodecanoyl-3-(9Z-octadecenoyl)-glycerol + CoA. The catalysed reaction is 1-hexadecanoylglycerol + (9Z)-octadecenoyl-CoA = 1-(9Z-octadecenoyl)-3-hexadecanoylglycerol + CoA. It carries out the reaction 1-octadecanoylglycerol + (9Z)-octadecenoyl-CoA = 1-octadecanoyl-3-(9Z-octadecenoyl)-glycerol + CoA. The enzyme catalyses 1-(9Z-octadecenoyl)-sn-glycerol + (9Z)-octadecenoyl-CoA = 1,3-di-(9Z-octadecenoyl)-glycerol + CoA. It catalyses the reaction 1-(9Z,12Z-octadecadienoyl)-glycerol + (9Z)-octadecenoyl-CoA = 1-(9Z-octadecenoyl)-3-(9Z,12Z-octadecadienoyl)-glycerol + CoA. The catalysed reaction is 1-(9Z,12Z,15Z-octadecatrienoyl)-glycerol + (9Z)-octadecenoyl-CoA = 1-(9Z,12Z,15Z-octadecatrienoyl)-3-(9Z-octadecenoyl)-glycerol + CoA. It carries out the reaction a 1-acyl-sn-glycerol + an acyl-CoA = a 1,3-diacyl-sn-glycerol + CoA. The enzyme catalyses a 3-acyl-sn-glycerol + an acyl-CoA = a 1,3-diacyl-sn-glycerol + CoA. It catalyses the reaction 3-octadecanoyl-sn-glycerol + (9Z)-octadecenoyl-CoA = 1-(9Z-octadecenoyl)-3-octadecanoyl-sn-glycerol + CoA. The protein operates within glycerolipid metabolism; triacylglycerol biosynthesis. Its function is as follows. Involved in glycerolipid synthesis and lipid metabolism. Catalyzes the formation of diacylglycerol, the precursor of triacylglycerol, by transferring the acyl chain of a fatty acyl-CoA to a monoacylglycerol, mainly at the sn-1 or sn-3 positions. It uses both sn-2-monoacylglycerol (2-acylglycerol) and sn-1-monoacylglycerol (1-acyl-sn-glycerol) equally well as substrates, and uses sn-3-monoacylglycerol (3-acyl-sn-glycerol) with lower efficiency. Probably not involved in absorption of dietary fat in the small intestine. This is 2-acylglycerol O-acyltransferase 1 from Mus musculus (Mouse).